A 225-amino-acid polypeptide reads, in one-letter code: Platelet-derived growth factor subunit B (225 aa).

Positions 1–12 are cleaved as a signal peptide; that stretch reads LPLCCYLRLVSA. Positions 13–73 are cleaved as a propeptide — removed in mature form; that stretch reads EGDPIPEELY…ESESSSRGRR (61 aa). Asn-55 carries N-linked (GlcNAc...) asparagine glycosylation. 3 disulfides stabilise this stretch: Cys-89–Cys-133, Cys-122–Cys-170, and Cys-126–Cys-172. The propeptide at 183-225 is removed in mature form; it reads RSPGTSREHRAKTPQTRVTVRTVRIRRPPKGKHRKFKHTHDKK.

It belongs to the PDGF/VEGF growth factor family. As to quaternary structure, antiparallel homodimer; disulfide-linked. Antiparallel heterodimer with PDGFA; disulfide-linked. The PDGFB homodimer interacts with PDGFRA and PDGFRB homodimers, and with heterodimers formed by PDGFRA and PDGFRB. The heterodimer composed of PDGFA and PDGFB interacts with PDGFRB homodimers, and with heterodimers formed by PDGFRA and PDGFRB. Interacts with XLKD1. Interacts with LRP1. Interacts with SORL1 (via the N-terminal ectodomain). Interacts with CD82; this interaction inhibits PDGFB-mediated signaling pathway. Expressed in a distinct subpopulation of smooth muscle cells in injured arteries.

The protein resides in the secreted. In terms of biological role, growth factor that plays an essential role in the regulation of embryonic development, cell proliferation, cell migration, survival and chemotaxis. Potent mitogen for cells of mesenchymal origin. Required for normal proliferation and recruitment of pericytes and vascular smooth muscle cells in the central nervous system, skin, lung, heart and placenta. Required for normal blood vessel development, and for normal development of kidney glomeruli. Plays an important role in wound healing. Signaling is modulated by the formation of heterodimers with PDGFA. The sequence is that of Platelet-derived growth factor subunit B (Pdgfb) from Rattus norvegicus (Rat).